Reading from the N-terminus, the 189-residue chain is Chitin synthase 2 (189 aa).

The protein belongs to the chitin synthase family. Class II subfamily.

The protein localises to the cell membrane. The catalysed reaction is [(1-&gt;4)-N-acetyl-beta-D-glucosaminyl](n) + UDP-N-acetyl-alpha-D-glucosamine = [(1-&gt;4)-N-acetyl-beta-D-glucosaminyl](n+1) + UDP + H(+). In terms of biological role, polymerizes chitin, a structural polymer of the cell wall and septum, by transferring the sugar moiety of UDP-GlcNAc to the non-reducing end of the growing chitin polymer. The polypeptide is Chitin synthase 2 (CHS2) (Exophiala exophialae (Black yeast-like fungus)).